Consider the following 520-residue polypeptide: MAALRLLAWALPRGVSALRPRPALPHRLIRRYVSDRSGSVHFYTDPVKAVEGVKDGSTVMLGGFGLCGIPENLIGALKTKGVKDLKIVSSNVGVDDFGLGILLASKQVRRVVCSYLGENALCEKLYLAGELELEMTPQGTLAERIRACGTGVPAFYTPTGYGTLVQEGGSPIRYAPDGHLITLSEPREVREFQGRFYLLEHAIRADFALIKGWKADRSGNVIFRGSARNFNVPMCKAADISVVEVEEIVDVGTFAPEDIHIPNIYVDRVIKGPKFEKRIERLTTRDSKPAPGSKDNDPSRTRIIKRAALEFQDGMYANLGIGIPVLASNYISPKMTVYLHSENGILGLGPFPLKNEVDADVINAGKQTVTVVPGGCFFASDDSFAMIRGGHLQLTMLGAMQVSQYGDLANWMVPGKKVKGMGGAMDLVSSKKTRVVVTMEHCTKTKQPKILKKCTMPLTGKRCVDLIITEKAVFEVNHSKGLTLVELWEGSSVDDIKATTACSFAVSPNLKPMQQIKLDA.

The N-terminal 39 residues, 1-39 (MAALRLLAWALPRGVSALRPRPALPHRLIRRYVSDRSGS), are a transit peptide targeting the mitochondrion. The disordered stretch occupies residues 280 to 299 (ERLTTRDSKPAPGSKDNDPS). Glutamate 342 acts as the 5-glutamyl coenzyme A thioester intermediate in catalysis.

It belongs to the 3-oxoacid CoA-transferase family. As to quaternary structure, homodimer. In terms of tissue distribution, testis specific. Expressed in late spermatids. Accumulates during spermiogenesis. Also detected in the midpiece of spermatozoa.

The protein resides in the mitochondrion. The catalysed reaction is a 3-oxo acid + succinyl-CoA = a 3-oxoacyl-CoA + succinate. Its pathway is ketone metabolism; succinyl-CoA degradation; acetoacetyl-CoA from succinyl-CoA: step 1/1. Key enzyme for ketone body catabolism. Transfers the CoA moiety from succinate to acetoacetate. Formation of the enzyme-CoA intermediate proceeds via an unstable anhydride species formed between the carboxylate groups of the enzyme and substrate. Probably play and important roles in the energy metabolism of spermatozoa. The chain is Succinyl-CoA:3-ketoacid coenzyme A transferase 2B, mitochondrial (Oxct2b) from Mus musculus (Mouse).